Consider the following 583-residue polypeptide: Chromosomal replication initiator protein DnaA (583 aa).

A domain I, interacts with DnaA modulators region spans residues Met1–Leu91. Positions Leu91–Ser241 are domain II. The tract at residues Lys151–Gly239 is disordered. Residues Glu172–Asp182 show a composition bias toward basic and acidic residues. The tract at residues Leu242 to Cys458 is domain III, AAA+ region. ATP-binding residues include Gly286, Gly288, Lys289, and Thr290. The segment at Ala459–Asp583 is domain IV, binds dsDNA.

This sequence belongs to the DnaA family. In terms of assembly, oligomerizes as a right-handed, spiral filament on DNA at oriC.

It is found in the cytoplasm. Functionally, plays an essential role in the initiation and regulation of chromosomal replication. ATP-DnaA binds to the origin of replication (oriC) to initiate formation of the DNA replication initiation complex once per cell cycle. Binds the DnaA box (a 9 base pair repeat at the origin) and separates the double-stranded (ds)DNA. Forms a right-handed helical filament on oriC DNA; dsDNA binds to the exterior of the filament while single-stranded (ss)DNA is stabiized in the filament's interior. The ATP-DnaA-oriC complex binds and stabilizes one strand of the AT-rich DNA unwinding element (DUE), permitting loading of DNA polymerase. After initiation quickly degrades to an ADP-DnaA complex that is not apt for DNA replication. Binds acidic phospholipids. The chain is Chromosomal replication initiator protein DnaA from Corynebacterium jeikeium (strain K411).